Here is a 404-residue protein sequence, read N- to C-terminus: Trigger factor (404 aa).

Residues 160–225 form the PPIase FKBP-type domain; that stretch reads KDHLFVRTEE…VLEVKTLKLP (66 aa).

This sequence belongs to the FKBP-type PPIase family. Tig subfamily.

It is found in the cytoplasm. It carries out the reaction [protein]-peptidylproline (omega=180) = [protein]-peptidylproline (omega=0). Its function is as follows. Involved in protein export. Acts as a chaperone by maintaining the newly synthesized protein in an open conformation. Functions as a peptidyl-prolyl cis-trans isomerase. This Thermus thermophilus (strain ATCC BAA-163 / DSM 7039 / HB27) protein is Trigger factor.